The following is a 572-amino-acid chain: Protein 5NUC (572 aa).

A signal peptide spans 1-25 (MLFFLNFFVLVFSIELALLTASAAA). Residues Asp-39 and His-41 each contribute to the Zn(2+) site. Cysteines 54 and 64 form a disulfide. A glycan (N-linked (GlcNAc...) asparagine) is linked at Asn-82. Zn(2+) contacts are provided by Asp-93, Asn-125, His-227, and His-250. Cys-360 and Cys-365 are joined by a disulfide. Residues Arg-361, Gln-399, Arg-404, and Phe-427 each contribute to the substrate site. N-linked (GlcNAc...) asparagine glycans are attached at residues Asn-454 and Asn-490. An intrachain disulfide couples Cys-488 to Cys-491. 512–518 (FMKDGGD) serves as a coordination point for substrate.

This sequence belongs to the 5'-nucleotidase family. It depends on Zn(2+) as a cofactor.

The enzyme catalyses UDP-sugar + H2O = UMP + alpha-D-aldose 1-phosphate.. It carries out the reaction a ribonucleoside 5'-phosphate + H2O = a ribonucleoside + phosphate. In terms of biological role, degradation of external UDP-glucose to uridine monophosphate and glucose-1-phosphate, which can then be used by the cell. This chain is Protein 5NUC (5NUC), found in Lutzomyia longipalpis (Sand fly).